Reading from the N-terminus, the 782-residue chain is Protein phosphatase 1 regulatory subunit 12C (782 aa).

Residues 1-17 (MSGEDGPAAGPGAAAAA) are compositionally biased toward low complexity. The segment at 1-43 (MSGEDGPAAGPGAAAAAARERRREQLRQWGARAGAEPGPGERR) is disordered. The residue at position 2 (Ser2) is an N-acetylserine. ANK repeat units lie at residues 100–129 (DGIS…TVNQ), 133–162 (EGWT…NIAA), 226–255 (TGAS…DPEL), and 259–288 (DGWT…GMDS). Positions 297 to 329 (CDLADEEVLSLLEELARKQEDLRNQKEASQSRG) form a coiled coil. The segment at 316–686 (EDLRNQKEAS…EEPDGGFRTL (371 aa)) is disordered. Over residues 323–337 (EASQSRGQEPQAPSS) the composition is skewed to polar residues. The span at 349-365 (SSREKISLQDLSKERRP) shows a compositional bias: basic and acidic residues. Acidic residues predominate over residues 374–383 (QDEDEGEEGP). Ser399, Ser407, Ser427, Ser452, and Ser509 each carry phosphoserine. Residues 449 to 463 (RSASSSWLEGTSTQA) show a composition bias toward polar residues. Positions 537-546 (VRDEESESQR) are enriched in basic and acidic residues. The segment covering 547 to 557 (KARSRLMRQSR) has biased composition (basic residues). Position 560 is a phosphothreonine; by CDC42BP and ROCK2 (Thr560). Residues 567-583 (DLKEAEKAAGKAPESEK) show a composition bias toward basic and acidic residues. Residues Ser604 and Ser647 each carry the phosphoserine modification. Positions 670 to 680 (PEPEPESEEPD) are enriched in acidic residues. The stretch at 681-782 (GGFRTLYAEL…LIRVISKLSK (102 aa)) forms a coiled coil.

As to quaternary structure, PP1 comprises a catalytic subunit, PPP1CA, PPP1CB or PPP1CC, and one or several targeting or regulatory subunits. PPP1R12C mediates binding to myosin. Interacts via its N-terminus with PPP1CB. Interacts with IL16. Interacts with the coiled-coil domain of MPRIP. Interacts with NOD2. Phosphorylation at Thr-560 is essential for its interaction with PPP1CB. Ubiquitously expressed. Highly expressed in heart.

Its subcellular location is the cytoplasm. It is found in the cytoskeleton. The protein resides in the stress fiber. Regulates myosin phosphatase activity. In Homo sapiens (Human), this protein is Protein phosphatase 1 regulatory subunit 12C.